Here is a 5043-residue protein sequence, read N- to C-terminus: Polyketide synthase PksJ (5043 aa).

Residues 141-481 (AVITDRGMHQ…ELPEIETSYT (341 aa)) form an adenylation 1 region. The Carrier 1 domain maps to 590 to 667 (RVREEIQKHL…RLASYLSEHE (78 aa)). Ser-627 carries the O-(pantetheine 4'-phosphoryl)serine modification. Residues 690–989 (QATFQPLSEV…NMLPIRSELN (300 aa)) are condensation. Residues 1181–1578 (TYRELDEKST…EHPGILECVV (398 aa)) are adenylation 2. The Carrier 2 domain occupies 1654–1729 (TSPKNIQDTV…NISQYITEQR (76 aa)). Position 1689 is an O-(pantetheine 4'-phosphoryl)serine (Ser-1689). A Ketosynthase family 3 (KS3) 1 domain is found at 1760–2186 (DDSVAIIGIS…GTNTHAIFEQ (427 aa)). Residues Cys-1932, His-2068, and His-2108 each act as for beta-ketoacyl synthase 1 activity in the active site. The N-terminal hotdog fold stretch occupies residues 2374 to 2499 (HPLLHQNTSD…GSAELASAAE (126 aa)). The 288-residue stretch at 2374-2661 (HPLLHQNTSD…TRVLEGEVHT (288 aa)) folds into the PKS/mFAS DH domain. His-2403 (proton acceptor; for dehydratase activity) is an active-site residue. A C-terminal hotdog fold region spans residues 2513-2661 (GKGKMSPDQF…TRVLEGEVHT (149 aa)). Asp-2575 serves as the catalytic Proton donor; for dehydratase activity. 2 Carrier domains span residues 3114 to 3188 (RKLE…VAAY) and 3212 to 3286 (SSLE…TVEH). 2 positions are modified to O-(pantetheine 4'-phosphoryl)serine: Ser-3148 and Ser-3246. Positions 3291–3314 (VQEREKPEGQEELQTKSSEAPKIT) are disordered. The Ketosynthase family 3 (KS3) 2 domain maps to 3339–3779 (FEPVAIVGIS…GVNAHIVIEE (441 aa)). Catalysis depends on for beta-ketoacyl synthase 2 activity residues Cys-3511, His-3646, and His-3695. The stretch at 3839–3872 (REEMDERLACVAGTMQELEEKLQAFVDGKEETDE) forms a coiled coil. The 78-residue stretch at 4459–4536 (GLLSETQSWL…RFADWLIGSY (78 aa)) folds into the Carrier 5 domain. An O-(pantetheine 4'-phosphoryl)serine modification is found at Ser-4496. The Ketosynthase family 3 (KS3) 3 domain maps to 4588-4992 (AEGIAVVGLS…GTNAHVIVEA (405 aa)). The active-site For beta-ketoacyl synthase 3 activity is Cys-4743.

This sequence belongs to the ATP-dependent AMP-binding enzyme family. Pantetheine 4'-phosphate is required as a cofactor.

Its subcellular location is the cytoplasm. It functions in the pathway antibiotic biosynthesis; bacillaene biosynthesis. Functionally, involved in some intermediate steps for the synthesis of the antibiotic polyketide bacillaene which is involved in secondary metabolism. This Bacillus subtilis (strain 168) protein is Polyketide synthase PksJ (pksJ).